We begin with the raw amino-acid sequence, 277 residues long: Digeranylgeranylglyceryl phosphate synthase (277 aa).

Helical transmembrane passes span 16-36, 84-104, 107-127, 146-166, 200-220, 221-241, and 257-277; these read ILAG…IPDI, ALYY…FLNI, FVFA…LKPL, GAIG…AFLV, AIIA…PVKV, GIGL…KASI, and LKIA…TKGV.

It belongs to the UbiA prenyltransferase family. DGGGP synthase subfamily. The cofactor is Mg(2+).

It is found in the cell membrane. The catalysed reaction is sn-3-O-(geranylgeranyl)glycerol 1-phosphate + (2E,6E,10E)-geranylgeranyl diphosphate = 2,3-bis-O-(geranylgeranyl)-sn-glycerol 1-phosphate + diphosphate. Its pathway is membrane lipid metabolism; glycerophospholipid metabolism. Its function is as follows. Prenyltransferase that catalyzes the transfer of the geranylgeranyl moiety of geranylgeranyl diphosphate (GGPP) to the C2 hydroxyl of (S)-3-O-geranylgeranylglyceryl phosphate (GGGP). This reaction is the second ether-bond-formation step in the biosynthesis of archaeal membrane lipids. The sequence is that of Digeranylgeranylglyceryl phosphate synthase from Pyrococcus furiosus (strain ATCC 43587 / DSM 3638 / JCM 8422 / Vc1).